A 396-amino-acid chain; its full sequence is Elongation factor Tu (396 aa).

In terms of domain architecture, tr-type G spans 10 to 206 (KPHCNIGTIG…AVDSYIPQPE (197 aa)). Residues 19 to 26 (GHVDHGKT) are G1. 19 to 26 (GHVDHGKT) contributes to the GTP binding site. Position 26 (threonine 26) interacts with Mg(2+). Positions 60 to 64 (GITIS) are G2. The segment at 81-84 (DCPG) is G3. GTP-binding positions include 81–85 (DCPGH) and 136–139 (NKVD). Residues 136-139 (NKVD) are G4. The tract at residues 174–176 (SAV) is G5.

The protein belongs to the TRAFAC class translation factor GTPase superfamily. Classic translation factor GTPase family. EF-Tu/EF-1A subfamily. As to quaternary structure, monomer.

The protein localises to the cytoplasm. It carries out the reaction GTP + H2O = GDP + phosphate + H(+). Its function is as follows. GTP hydrolase that promotes the GTP-dependent binding of aminoacyl-tRNA to the A-site of ribosomes during protein biosynthesis. The sequence is that of Elongation factor Tu from Rhizorhabdus wittichii (strain DSM 6014 / CCUG 31198 / JCM 15750 / NBRC 105917 / EY 4224 / RW1) (Sphingomonas wittichii).